A 290-amino-acid chain; its full sequence is N-acetylmannosamine kinase (290 aa).

ATP is bound by residues 6–13 (ALDIGGTK) and 132–139 (GVGGGIIL). Zn(2+) is bound by residues H156, C166, C168, and C173.

It belongs to the ROK (NagC/XylR) family. NanK subfamily. Homodimer.

It catalyses the reaction an N-acyl-D-mannosamine + ATP = an N-acyl-D-mannosamine 6-phosphate + ADP + H(+). The protein operates within amino-sugar metabolism; N-acetylneuraminate degradation; D-fructose 6-phosphate from N-acetylneuraminate: step 2/5. In terms of biological role, catalyzes the phosphorylation of N-acetylmannosamine (ManNAc) to ManNAc-6-P. This is N-acetylmannosamine kinase from Yersinia pseudotuberculosis serotype O:1b (strain IP 31758).